A 901-amino-acid polypeptide reads, in one-letter code: Alanine--tRNA ligase (901 aa).

Zn(2+) contacts are provided by H581, H585, C684, and H688.

The protein belongs to the class-II aminoacyl-tRNA synthetase family. Requires Zn(2+) as cofactor.

It is found in the cytoplasm. The catalysed reaction is tRNA(Ala) + L-alanine + ATP = L-alanyl-tRNA(Ala) + AMP + diphosphate. Its function is as follows. Catalyzes the attachment of alanine to tRNA(Ala) in a two-step reaction: alanine is first activated by ATP to form Ala-AMP and then transferred to the acceptor end of tRNA(Ala). Also edits incorrectly charged Ser-tRNA(Ala) and Gly-tRNA(Ala) via its editing domain. In Mycobacterium ulcerans (strain Agy99), this protein is Alanine--tRNA ligase.